We begin with the raw amino-acid sequence, 325 residues long: Small ribosomal subunit protein RACK1 (325 aa).

WD repeat units follow at residues 13–44 (AHTD…ILWH), 61–91 (GHSH…RLWD), 103–133 (GHTK…KLWN), 147–179 (AHSD…KVWN), 191–221 (GHSG…LLWD), 232–261 (DAGS…KIWD), and 291–321 (KKVI…RVWG).

It belongs to the WD repeat G protein beta family. Ribosomal protein RACK1 subfamily.

Plays a role in hormone-mediated cell division. The protein is Small ribosomal subunit protein RACK1 (GB1) of Medicago sativa (Alfalfa).